The chain runs to 559 residues: Protochlorophyllide-dependent translocon component 52, chloroplastic (559 aa).

The transit peptide at 1 to 55 (MEAALAACALPSLRILNTKPRFRCSFSNPSLPISPNSLITRKSSRFTTAVSSPPS) directs the protein to the chloroplast. The disordered stretch occupies residues 44–70 (SRFTTAVSSPPSSSAATSTNSPPEPEA). Residues 47–64 (TTAVSSPPSSSAATSTNS) are compositionally biased toward low complexity. Residues 85-195 (WYPVMPICDL…STVQHEIIWF (111 aa)) form the Rieske domain. Residues cysteine 127, histidine 129, cysteine 147, and histidine 150 each coordinate [2Fe-2S] cluster. 2 residues coordinate Fe cation: histidine 248 and histidine 253. The Redox-active motif motif lies at 483 to 486 (CSSC). 2 helical membrane-spanning segments follow: residues 493-513 (LNAL…VMAV) and 525-545 (IAVL…SHFI).

[2Fe-2S] cluster serves as cofactor.

The protein localises to the plastid. Its subcellular location is the chloroplast inner membrane. It carries out the reaction protochlorophyllide a + 4 reduced [2Fe-2S]-[ferredoxin] + 2 O2 + 5 H(+) = protochlorophyllide b + 4 oxidized [2Fe-2S]-[ferredoxin] + 3 H2O. With respect to regulation, down-regulated by light. Its function is as follows. Part of a translocon most abundantly expressed in etiolated plants and involved in the protochlorophyllide-dependent import of the precursor NADPH:protochlorophyllide oxidoreductase A (pPORA). The chain is Protochlorophyllide-dependent translocon component 52, chloroplastic from Arabidopsis thaliana (Mouse-ear cress).